The chain runs to 494 residues: Trigger factor (494 aa).

One can recognise a PPIase FKBP-type domain in the interval 169 to 254; the sequence is GDRITMDYVG…VKEVAAPADV (86 aa). Residues 441–494 are disordered; sequence LAEEEGEAKAETKKAAPKKKAAAKAEAADAGEGEEAAPKKKAAPKKKAADESAE.

The protein belongs to the FKBP-type PPIase family. Tig subfamily.

It localises to the cytoplasm. It carries out the reaction [protein]-peptidylproline (omega=180) = [protein]-peptidylproline (omega=0). Its function is as follows. Involved in protein export. Acts as a chaperone by maintaining the newly synthesized protein in an open conformation. Functions as a peptidyl-prolyl cis-trans isomerase. The chain is Trigger factor from Rhizobium johnstonii (strain DSM 114642 / LMG 32736 / 3841) (Rhizobium leguminosarum bv. viciae).